Consider the following 161-residue polypeptide: DNA-directed RNA polymerase 18 kDa subunit (161 aa).

It belongs to the poxviridae DNA-directed RNA polymerase 18 kDa subunit family. In terms of assembly, the DNA-dependent RNA polymerase used for intermediate and late genes expression consists of eight subunits Rpo30/OPG66, Rpo7/OPG90, Rpo22/OPG103, Rpo147/OPG105, Rpo18/OPG119, Rpo19/OPG131, Rpo132/OPG151 and Rpo35/OPG156. The same holoenzyme, with the addition of the transcription-specificity factor OPG109, is used for early gene expression.

It is found in the virion. The catalysed reaction is RNA(n) + a ribonucleoside 5'-triphosphate = RNA(n+1) + diphosphate. Part of the DNA-dependent RNA polymerase which catalyzes the transcription of viral DNA into RNA using the four ribonucleoside triphosphates as substrates. Responsible for the transcription of early, intermediate and late genes. DNA-dependent RNA polymerase associates with the early transcription factor (ETF), itself composed of OPG118 and OPG133, thereby allowing the early genes transcription. Late transcription, and probably also intermediate transcription, require newly synthesized RNA polymerase. This chain is DNA-directed RNA polymerase 18 kDa subunit (OPG119), found in Homo sapiens (Human).